Here is a 363-residue protein sequence, read N- to C-terminus: Flagellar P-ring protein (363 aa).

The N-terminal stretch at 1 to 20 is a signal peptide; sequence MKLKLFLLSVLLLVSGSSQA.

Belongs to the FlgI family. The basal body constitutes a major portion of the flagellar organelle and consists of four rings (L,P,S, and M) mounted on a central rod.

It is found in the periplasm. The protein localises to the bacterial flagellum basal body. In terms of biological role, assembles around the rod to form the L-ring and probably protects the motor/basal body from shearing forces during rotation. The chain is Flagellar P-ring protein from Shewanella woodyi (strain ATCC 51908 / MS32).